A 351-amino-acid chain; its full sequence is Regulator of V-ATPase in vacuolar membrane protein 2 (351 aa).

In terms of assembly, component of the RAVE complex composed of RAV1, RAV2 and CBF3D/SKP1. Within the complex, it interacts directly with RAV1 and CBF3D. Interacts with the V-ATPase V1 subunits VMA1, VMA2 and VMA8.

The protein resides in the cytoplasm. Its subcellular location is the early endosome membrane. Its function is as follows. Component of the RAVE complex, which is required for stable assembly of the vacuolar ATPase complex V-ATPase under many conditions. May be required for transport between the early endosome and the late endosome/prevacuolar compartment (PVC). The polypeptide is Regulator of V-ATPase in vacuolar membrane protein 2 (RAV2) (Saccharomyces cerevisiae (strain ATCC 204508 / S288c) (Baker's yeast)).